The sequence spans 568 residues: Glucose-6-phosphate isomerase, cytosolic (568 aa).

The Proton donor role is filled by Glu-360. Active-site residues include His-391 and Lys-516.

It belongs to the GPI family. In terms of assembly, homodimer.

It localises to the cytoplasm. It carries out the reaction alpha-D-glucose 6-phosphate = beta-D-fructose 6-phosphate. The protein operates within carbohydrate degradation; glycolysis; D-glyceraldehyde 3-phosphate and glycerone phosphate from D-glucose: step 2/4. This chain is Glucose-6-phosphate isomerase, cytosolic (PGIC), found in Oenothera sinuata var. hirsuta (Mexican evening primrose).